We begin with the raw amino-acid sequence, 378 residues long: Small ribosomal subunit protein bS1 (378 aa).

5 S1 motif domains span residues 1-66 (ETVT…VSRR), 87-155 (GMEV…LGLK), 172-242 (GTKL…LGLK), 259-329 (GDRV…LGVK), and 346-378 (GAIV…ASEA).

Belongs to the bacterial ribosomal protein bS1 family.

Its function is as follows. Binds mRNA; thus facilitating recognition of the initiation point. It is needed to translate mRNA with a short Shine-Dalgarno (SD) purine-rich sequence. This is Small ribosomal subunit protein bS1 (rpsA) from Providencia sp.